Reading from the N-terminus, the 91-residue chain is CRISPR-associated endoribonuclease Cas2 2 (91 aa).

D10 is a Mg(2+) binding site.

It belongs to the CRISPR-associated endoribonuclease Cas2 protein family. Homodimer, forms a heterotetramer with a Cas1 homodimer. The cofactor is Mg(2+).

CRISPR (clustered regularly interspaced short palindromic repeat), is an adaptive immune system that provides protection against mobile genetic elements (viruses, transposable elements and conjugative plasmids). CRISPR clusters contain sequences complementary to antecedent mobile elements and target invading nucleic acids. CRISPR clusters are transcribed and processed into CRISPR RNA (crRNA). Functions as a ssRNA-specific endoribonuclease. Involved in the integration of spacer DNA into the CRISPR cassette. The polypeptide is CRISPR-associated endoribonuclease Cas2 2 (Thermodesulfovibrio yellowstonii (strain ATCC 51303 / DSM 11347 / YP87)).